The chain runs to 203 residues: UPF0637 protein Sca_0732 (203 aa).

The protein belongs to the UPF0637 family.

The chain is UPF0637 protein Sca_0732 from Staphylococcus carnosus (strain TM300).